A 361-amino-acid chain; its full sequence is Dihydroorotate dehydrogenase (quinone) (361 aa).

Residues 67 to 71 and threonine 91 contribute to the FMN site; that span reads AGLDK. Lysine 71 serves as a coordination point for substrate. 116–120 is a substrate binding site; sequence NRMGF. The FMN site is built by asparagine 145 and asparagine 178. Asparagine 178 is a substrate binding site. The active-site Nucleophile is the serine 181. Asparagine 183 provides a ligand contact to substrate. FMN-binding residues include lysine 223 and glycine 251. 252 to 253 lines the substrate pocket; sequence NT. FMN contacts are provided by residues glycine 273, glycine 302, and 323-324; that span reads YT.

This sequence belongs to the dihydroorotate dehydrogenase family. Type 2 subfamily. In terms of assembly, monomer. The cofactor is FMN.

It is found in the cell membrane. It catalyses the reaction (S)-dihydroorotate + a quinone = orotate + a quinol. It participates in pyrimidine metabolism; UMP biosynthesis via de novo pathway; orotate from (S)-dihydroorotate (quinone route): step 1/1. In terms of biological role, catalyzes the conversion of dihydroorotate to orotate with quinone as electron acceptor. The polypeptide is Dihydroorotate dehydrogenase (quinone) (Deinococcus geothermalis (strain DSM 11300 / CIP 105573 / AG-3a)).